Reading from the N-terminus, the 512-residue chain is Sodium-dependent phosphate transport protein 1, chloroplastic (512 aa).

The N-terminal 59 residues, 1 to 59, are a transit peptide targeting the chloroplast; the sequence is MNARALLCSSNIHSLYTSNRPPEKTSSSRSLRNLKPSPKSLRVWIYPRNRSSVFRVLVR. The next 11 helical transmembrane spans lie at 103–123, 141–161, 171–191, 192–212, 234–254, 257–277, 323–343, 361–381, 401–421, 453–473, and 486–506; these read WVIVLLCFSAFLLCNMDRVNM, VGLIQSSFFWGYLLTQIAGGI, VLGFGVIWWSIATILTPVAAK, LGLPYLLVVRAFMGVGEGVAM, LVYSGMYLGSVTGLAFSPFLI, FGWPSVFYSFGSLGTVWLTLW, VWALISCHFCHNWGTFILLTW, LLSVFPWMTMAISANAGGWIA, IGFLGPAFFLTQLKHIDSPTM, GVLLGLSNTAGVLAGVLGTAA, and VFTISVGLYLVGTVIWNLFST.

The protein belongs to the major facilitator superfamily. Sodium/anion cotransporter (TC 2.A.1.14) family. Expressed in flower buds, sepals of mature flowers and mature leaves, less in senescent leaves and at low levels in roots.

The protein resides in the plastid. It localises to the chloroplast thylakoid membrane. Specific for inorganic phosphate transport across the thylakoid membrane in a sodium dependent manner. Binds glutamate but cannot transport it. May act as an ascorbate transporter at the thylakoid membrane. This is Sodium-dependent phosphate transport protein 1, chloroplastic (ANTR1) from Arabidopsis thaliana (Mouse-ear cress).